A 258-amino-acid chain; its full sequence is Trans-aconitate 2-methyltransferase (258 aa).

This sequence belongs to the methyltransferase superfamily. Tam family.

It is found in the cytoplasm. The catalysed reaction is trans-aconitate + S-adenosyl-L-methionine = (E)-3-(methoxycarbonyl)pent-2-enedioate + S-adenosyl-L-homocysteine. Its function is as follows. Catalyzes the S-adenosylmethionine monomethyl esterification of trans-aconitate. The sequence is that of Trans-aconitate 2-methyltransferase from Deinococcus radiodurans (strain ATCC 13939 / DSM 20539 / JCM 16871 / CCUG 27074 / LMG 4051 / NBRC 15346 / NCIMB 9279 / VKM B-1422 / R1).